We begin with the raw amino-acid sequence, 255 residues long: MAVISMKQLLEAGVHFGHQTRRWNPKMAKYIFTERNGIHVIDLQQTVKLADQAYEFVRDAAANDAVILFVGTKKQAAEAVADEATRAGQYFINHRWLGGTLTNWGTIQKRITRLKEIKRMEEEGTFEVLPKKEVALLNKQRARLEKFLGGIEDMPRIPDVMYVVDPHKEQIAVKEAKKLGIPVVAMVDTNADPDDIDVIIPANDDAIRAVKLITSKLADAIIEGRQGEDASVEFEADTKADSIEEIVEVVEGDNN.

The protein belongs to the universal ribosomal protein uS2 family.

The protein is Small ribosomal subunit protein uS2 of Streptococcus uberis (strain ATCC BAA-854 / 0140J).